Reading from the N-terminus, the 1093-residue chain is Probable cellulose synthase A catalytic subunit 3 [UDP-forming] (1093 aa).

Over 1–280 the chain is Cytoplasmic; that stretch reads MEASAGLVAG…PSSQINPYRM (280 aa). Zn(2+)-binding residues include C39, C42, C58, C61, C66, C69, C81, and C84. The segment at 39-85 adopts an RING-type; degenerate zinc-finger fold; the sequence is CQICGDDVGLNPDGEPFVACNECAFPVCRDCYEYERREGTQNCPQCK. Over residues 233–246 the composition is skewed to basic and acidic residues; that stretch reads LHQMRNDGGGKDWD. The tract at residues 233–257 is disordered; that stretch reads LHQMRNDGGGKDWDGDGDDGDLPLM. The helical transmembrane segment at 281 to 301 threads the bilayer; it reads VIIIRLVVLGFFFHYRVMHPV. The Extracellular portion of the chain corresponds to 302-303; sequence PD. The chain crosses the membrane as a helical span at residues 304–324; it reads AFALWLISVICEIWFAMSWIL. The Cytoplasmic segment spans residues 325–869; sequence DQFPKWFPIE…CLERFSYINS (545 aa). UDP-alpha-D-glucose is bound by residues S363, K369, E370, and D399. D399 is a catalytic residue. A coiled-coil region spans residues 453 to 480; the sequence is VRERRAMKREYEEFKVRINALVAKAQKV. K540 lines the UDP-alpha-D-glucose pocket. Residues K541 and D565 each contribute to the Mn(2+) site. D793 is an active-site residue. The helical transmembrane segment at 870–890 threads the bilayer; the sequence is IVYPFTSIPLLAYCTLPAICL. Topologically, residues 891–902 are extracellular; sequence LTGKFITPELTN. A helical membrane pass occupies residues 903–923; that stretch reads VASLWFMSLFICIFATGILEM. The Cytoplasmic portion of the chain corresponds to 924 to 939; that stretch reads RWSGVGIDDWWRNEQF. The helical transmembrane segment at 940–960 threads the bilayer; sequence WVIGGVSSHLFALFQGLLKVI. Residues 961–988 lie on the Extracellular side of the membrane; it reads AGIDTSFTVTSKGGDDEEFSELYTFKWT. A helical membrane pass occupies residues 989-1009; sequence TLLIPPTTLLLLNFIGVVAGV. The Cytoplasmic portion of the chain corresponds to 1010-1020; that stretch reads SNAINNGYESW. The helical transmembrane segment at 1021 to 1041 threads the bilayer; it reads GPLFGKLFFAFWVIVHLYPFL. Residues 1042–1050 are Extracellular-facing; that stretch reads KGLVGRQNR. Residues 1051 to 1071 traverse the membrane as a helical segment; that stretch reads TPTIVIVWSILLASIFSLLWV. The Cytoplasmic segment spans residues 1072 to 1093; the sequence is RIDPFLAKNDGPLLEECGLDCN.

It belongs to the glycosyltransferase 2 family. Plant cellulose synthase subfamily. The cofactor is Mn(2+). Zn(2+) serves as cofactor.

The protein localises to the cell membrane. It catalyses the reaction [(1-&gt;4)-beta-D-glucosyl](n) + UDP-alpha-D-glucose = [(1-&gt;4)-beta-D-glucosyl](n+1) + UDP + H(+). It functions in the pathway glycan metabolism; plant cellulose biosynthesis. In terms of biological role, probable catalytic subunit of cellulose synthase terminal complexes ('rosettes'), required for beta-1,4-glucan microfibril crystallization, a major mechanism of the cell wall formation. This is Probable cellulose synthase A catalytic subunit 3 [UDP-forming] (CESA3) from Oryza sativa subsp. japonica (Rice).